Reading from the N-terminus, the 31-residue chain is Cytochrome b6-f complex subunit 6 (31 aa).

A helical transmembrane segment spans residues L4 to A24.

Belongs to the PetL family. The 4 large subunits of the cytochrome b6-f complex are cytochrome b6, subunit IV (17 kDa polypeptide, PetD), cytochrome f and the Rieske protein, while the 4 small subunits are PetG, PetL, PetM and PetN. The complex functions as a dimer.

It is found in the plastid. It localises to the chloroplast thylakoid membrane. In terms of biological role, component of the cytochrome b6-f complex, which mediates electron transfer between photosystem II (PSII) and photosystem I (PSI), cyclic electron flow around PSI, and state transitions. PetL is important for photoautotrophic growth as well as for electron transfer efficiency and stability of the cytochrome b6-f complex. This chain is Cytochrome b6-f complex subunit 6, found in Tupiella akineta (Green alga).